We begin with the raw amino-acid sequence, 299 residues long: GTPase Era (299 aa).

Residues 5–175 (RSGFVCLVGR…IDVLAAALPP (171 aa)) enclose the Era-type G domain. Residues 13–20 (GRPNTGKS) form a G1 region. Residue 13-20 (GRPNTGKS) coordinates GTP. The interval 39–43 (QTTRH) is G2. The G3 stretch occupies residues 60–63 (DTPG). GTP-binding positions include 60–64 (DTPGL) and 124–127 (TKID). Positions 124 to 127 (TKID) are G4. The G5 stretch occupies residues 154–156 (VSA). A KH type-2 domain is found at 206-285 (VRDELPHSLA…YLDLRVKVAK (80 aa)).

It belongs to the TRAFAC class TrmE-Era-EngA-EngB-Septin-like GTPase superfamily. Era GTPase family. As to quaternary structure, monomer.

It localises to the cell envelope. The protein localises to the secreted. The protein resides in the cell wall. In terms of biological role, exhibits GTPase activity. Binds RNA but is probably not involved in ribosome assembly in mycobacteria. The protein is GTPase Era of Mycobacterium avium (strain 104).